Reading from the N-terminus, the 404-residue chain is Cytochrome b561 and DOMON domain-containing protein At5g35735 (404 aa).

The signal sequence occupies residues 1 to 25 (MDRTQSPKTALFAVLATLLVLTVNG). In terms of domain architecture, DOMON spans 49 to 164 (LGSFLHWTYN…ITANQLWQVG (116 aa)). Positions 170 to 369 (VPASHQTSGD…LEPLTWFIVL (200 aa)) constitute a Cytochrome b561 domain. The disordered stretch occupies residues 172–207 (ASHQTSGDNMRSSGRIDFRTGQASAGGGGSGDRLRK). The segment covering 173 to 183 (SHQTSGDNMRS) has biased composition (polar residues). The next 2 helical transmembrane spans lie at 210–230 (THGVLNAVSWGVLMPMGAMMA) and 241–261 (WFYLHIAFQVSGYVIGVAGWA). His-211, His-245, and His-278 together coordinate heme b. Residues 280 to 300 (NLGIALFTFATLQVFALLVRP) traverse the membrane as a helical segment. Residue His-314 participates in heme b binding. Transmembrane regions (helical) follow at residues 316 to 336 (TVGYTTIILSIVNIFKGFDIL) and 349 to 369 (ILIFLGACVLILEPLTWFIVL). Residues 376–404 (GNTVAAPTSSKYSNGVNGTTTTGPHHQDA) are disordered. Residues 380 to 404 (AAPTSSKYSNGVNGTTTTGPHHQDA) are compositionally biased toward polar residues.

The cofactor is heme b.

The protein localises to the membrane. Its function is as follows. May act as a catecholamine-responsive trans-membrane electron transporter. The chain is Cytochrome b561 and DOMON domain-containing protein At5g35735 from Arabidopsis thaliana (Mouse-ear cress).